Consider the following 433-residue polypeptide: Serine/threonine-protein phosphatase 2A activator 2 (433 aa).

Residues 1–10 (MTSQAPPQPA) are compositionally biased toward pro residues. 2 disordered regions span residues 1–67 (MTSQ…NWTF) and 367–400 (SMSE…GTGW). Residues 11 to 23 (SSPGVAAPAAASS) show a composition bias toward low complexity. Positions 45–59 (NPTPIPETPALPTPP) are enriched in pro residues. Acidic residues predominate over residues 367–382 (SMSEDTGAGDEADVED). The segment covering 383 to 396 (DPHAGHDHTGKAHD) has biased composition (basic and acidic residues).

Belongs to the PTPA-type PPIase family.

It is found in the cytoplasm. The enzyme catalyses [protein]-peptidylproline (omega=180) = [protein]-peptidylproline (omega=0). Its function is as follows. PPIases accelerate the folding of proteins. It catalyzes the cis-trans isomerization of proline imidic peptide bonds in oligopeptides. Acts as a regulatory subunit for PP2A-like phosphatases modulating their activity or substrate specificity, probably by inducing a conformational change in the catalytic subunit, a direct target of the PPIase. Can reactivate inactive phosphatase PP2A-phosphatase methylesterase complexes (PP2Ai) in presence of ATP and Mg(2+) by dissociating the inactive form from the complex. This is Serine/threonine-protein phosphatase 2A activator 2 (RRD2) from Gibberella zeae (strain ATCC MYA-4620 / CBS 123657 / FGSC 9075 / NRRL 31084 / PH-1) (Wheat head blight fungus).